The primary structure comprises 883 residues: Bifunctional heparan sulfate N-deacetylase/N-sulfotransferase 2 (883 aa).

The Cytoplasmic portion of the chain corresponds to M1–R18. Residues L19–S39 form a helical; Signal-anchor for type II membrane protein membrane-spanning segment. Over T40–G883 the chain is Lumenal. Residues S41–E597 form a heparan sulfate N-deacetylase 2 region. A disordered region spans residues P49–R82. The segment covering P65–P77 has biased composition (pro residues). N233, N350, and N400 each carry an N-linked (GlcNAc...) asparagine glycan. The heparan sulfate N-sulfotransferase 2 stretch occupies residues K598 to G883. The active-site For sulfotransferase activity is K613. K613–T617 lines the 3'-phosphoadenylyl sulfate pocket. Residue N666 is glycosylated (N-linked (GlcNAc...) asparagine). Position 711 (S711) interacts with 3'-phosphoadenylyl sulfate. N726 and N802 each carry an N-linked (GlcNAc...) asparagine glycan. An intrachain disulfide couples C817 to C827. 3'-phosphoadenylyl sulfate is bound at residue K832–Y836.

Belongs to the sulfotransferase 1 family. NDST subfamily. In terms of assembly, monomer. Widely expressed in adult and throughout development.

It is found in the golgi apparatus membrane. It carries out the reaction alpha-D-glucosaminyl-[heparan sulfate](n) + 3'-phosphoadenylyl sulfate = N-sulfo-alpha-D-glucosaminyl-[heparan sulfate](n) + adenosine 3',5'-bisphosphate + 2 H(+). Its pathway is glycan metabolism; heparan sulfate biosynthesis. It participates in glycan metabolism; heparin biosynthesis. Its function is as follows. Essential bifunctional enzyme that catalyzes both the N-deacetylation and the N-sulfation of glucosamine (GlcNAc) of the glycosaminoglycan in heparan sulfate. Modifies the GlcNAc-GlcA disaccharide repeating sugar backbone to make N-sulfated heparosan, a prerequisite substrate for later modifications in heparin biosynthesis. Plays a role in determining the extent and pattern of sulfation of heparan sulfate. Required for the exosomal release of SDCBP, CD63 and syndecan. The protein is Bifunctional heparan sulfate N-deacetylase/N-sulfotransferase 2 (Ndst2) of Mus musculus (Mouse).